Consider the following 22-residue polypeptide: Chlorate reductase subunit gamma (22 aa).

Residues 1–22 (EXSEQNPNILEIKPGDTVKVXT) are disordered.

Heterotrimer of alpha, beta and gamma subunits. Requires heme b as cofactor.

Its subcellular location is the cytoplasm. In terms of biological role, may transfer electrons to the iron-sulfur centers of the beta subunit of chlorate reductase. The polypeptide is Chlorate reductase subunit gamma (Stutzerimonas chloritidismutans (Pseudomonas chloritidismutans)).